Here is a 314-residue protein sequence, read N- to C-terminus: Peroxisome biogenesis factor 10 (314 aa).

Over Met-1–Glu-7 the chain is Peroxisomal matrix. A helical membrane pass occupies residues Ile-8–Leu-37. Gly-38 is a topological domain (cytoplasmic). The helical transmembrane segment at Gln-39 to Ser-60 threads the bilayer. Residues Thr-61–Pro-90 are Peroxisomal matrix-facing. A helical membrane pass occupies residues Ser-91–Ile-110. Residues Gln-111–Asp-142 lie on the Cytoplasmic side of the membrane. A helical membrane pass occupies residues Val-143–Thr-166. Over Gly-167–Arg-197 the chain is Peroxisomal matrix. Residues Phe-198 to Phe-218 form a helical membrane-spanning segment. Residues Leu-219 to Leu-314 lie on the Cytoplasmic side of the membrane. Residues Cys-255, Cys-258, Cys-269, His-271, Cys-274, Cys-277, Cys-296, and Cys-299 each coordinate Zn(2+). The RING-type zinc finger occupies Cys-255–Arg-300.

This sequence belongs to the pex2/pex10/pex12 family. As to quaternary structure, component of the PEX2-PEX10-PEX12 retrotranslocation channel.

It localises to the peroxisome membrane. It carries out the reaction S-ubiquitinyl-[E2 ubiquitin-conjugating enzyme]-L-cysteine + [acceptor protein]-L-lysine = [E2 ubiquitin-conjugating enzyme]-L-cysteine + N(6)-ubiquitinyl-[acceptor protein]-L-lysine.. It functions in the pathway protein modification; protein ubiquitination. With respect to regulation, the E3 ubiquitin-protein ligase activity is stimulated by PEX12/prx-12. In terms of biological role, E3 ubiquitin-protein ligase component of a retrotranslocation channel required for peroxisome organization by mediating export of the PEX5/prx-5 receptor from peroxisomes to the cytosol, thereby promoting PEX5/prx-5 recycling. The retrotranslocation channel is composed of PEX2/prx-2, PEX10/prx-10 and PEX12/prx-12; each subunit contributing transmembrane segments that coassemble into an open channel that specifically allows the passage of PEX5/prx-5 through the peroxisomal membrane. PEX10/prx-10 also regulates PEX5 recycling by acting as a E3 ubiquitin-protein ligase. When PEX5/prx-5 recycling is compromised, PEX10/prx-10 catalyzes polyubiquitination of PEX5/prx-5 during its passage through the retrotranslocation channel, leading to its degradation. This chain is Peroxisome biogenesis factor 10, found in Caenorhabditis elegans.